Consider the following 902-residue polypeptide: MTRLRSAASTITNRSTPALALTASHAGSHPAVIVPIQPLLLTLERRPSCPHRVSYPEIEAYRGISSSLRSHNAIVRASDIMAQIDPRDVGTPDEWVPRHPELIRLTGRHPFNSEPPLKYASTFITPMALHYVRNHGPVPRLEWDTHTFSIDGLVKKPRTFGMNELVTTFEQETVTFPVLLVCAGNRRKEQNMIKKTIGFSWGAAGCSTAEWTGVPLHVLLTACGVDREKAQWVWFEGIEDLPHDKYGTCIRASTELDPECDVLVAWKANGELLGPDHGFPVRLIVPGHIGGRMVKWLERIHVSDHESSNHHHIMDNRVLPSHVTAETATAEGWWSKSPYAIMELNVNAVVILPNHDDLLALGEDTTFNDIETYTIKGYAYSGGGRRVIRVEVTLDDGASWQLARIIYHERPSKYGKMWCWVHYELAAPMSSLLCAREVCVRAWDSSMNLMPAFPTWNVMGMMNNPWYRVKIHHEQDTNSLRFEHPTQAGNQKGGWMTKERIMTNDVDSIKMLQVEPLDTSSAATPKPGLTADELSELPLIFADEVAKHNSKKSCWFICRDLVYDATPFLDEHPGGATSILLCGGTDCTDEFESIHSTKAWQMLKKYCIGRCSSTEDDTGTSDTSSDHEETDVALKGRTKVPIVLISREVVSHDARIFKFALPAKDLRLGLPIGNHVFLYAKINGKTAVRAYTPISSENDEDRGFVSFLIKVYFAGDNPVHPEGGLFSQYLDGLHLGQQIQIKGPLGHFTYYGDGNFSLETTNFHAYKFGFVAGGTGITPVYQVMRAILEDAKDQTKVALIYCVRSQRDLLLRKELETLQKLRPGQCRIFYTLSDMELLDRNDPIVRGWAYGKSRLNFAMVKNIIGSDAEDVCMCGPEGMIEYACKPALLKLNYDLKTQTTVF.

Cysteine 182 provides a ligand contact to Mo-molybdopterin. In terms of domain architecture, Cytochrome b5 heme-binding spans 537–612 (LPLIFADEVA…LKKYCIGRCS (76 aa)). Residues histidine 572 and histidine 595 each coordinate heme. The 115-residue stretch at 637–751 (RTKVPIVLIS…KGPLGHFTYY (115 aa)) folds into the FAD-binding FR-type domain. FAD is bound by residues 689 to 692 (RAYT), 708 to 712 (LIKVY), phenylalanine 713, 725 to 727 (LFS), and threonine 778. 872-879 (CMCGPEGM) contacts NADP(+).

It belongs to the nitrate reductase family. In terms of assembly, homodimer. Requires FAD as cofactor. The cofactor is heme. Mo-molybdopterin is required as a cofactor.

The enzyme catalyses nitrite + NADP(+) + H2O = nitrate + NADPH + H(+). In terms of biological role, nitrate reductase is a key enzyme involved in the first step of nitrate assimilation in plants, fungi and bacteria. This chain is Nitrate reductase [NADPH] (NIAA), found in Phytophthora infestans (Potato late blight agent).